Reading from the N-terminus, the 573-residue chain is 2-succinyl-5-enolpyruvyl-6-hydroxy-3-cyclohexene-1-carboxylate synthase (573 aa).

Belongs to the TPP enzyme family. MenD subfamily. As to quaternary structure, homodimer. The cofactor is Mg(2+). Mn(2+) serves as cofactor. It depends on thiamine diphosphate as a cofactor.

It catalyses the reaction isochorismate + 2-oxoglutarate + H(+) = 5-enolpyruvoyl-6-hydroxy-2-succinyl-cyclohex-3-ene-1-carboxylate + CO2. The protein operates within quinol/quinone metabolism; 1,4-dihydroxy-2-naphthoate biosynthesis; 1,4-dihydroxy-2-naphthoate from chorismate: step 2/7. It participates in quinol/quinone metabolism; menaquinone biosynthesis. Its function is as follows. Catalyzes the thiamine diphosphate-dependent decarboxylation of 2-oxoglutarate and the subsequent addition of the resulting succinic semialdehyde-thiamine pyrophosphate anion to isochorismate to yield 2-succinyl-5-enolpyruvyl-6-hydroxy-3-cyclohexene-1-carboxylate (SEPHCHC). The protein is 2-succinyl-5-enolpyruvyl-6-hydroxy-3-cyclohexene-1-carboxylate synthase of Shewanella baltica (strain OS185).